The chain runs to 57 residues: MSKTVVRKNESLEDALRRFKRTVSKSGTLQESRKREFYEKPSVKRKKKSEAARKRKF.

Positions 24-57 (SKSGTLQESRKREFYEKPSVKRKKKSEAARKRKF) are disordered. Positions 31–42 (ESRKREFYEKPS) are enriched in basic and acidic residues. Over residues 43–57 (VKRKKKSEAARKRKF) the composition is skewed to basic residues.

The protein belongs to the bacterial ribosomal protein bS21 family.

This is Small ribosomal subunit protein bS21 (rpsU) from Listeria innocua serovar 6a (strain ATCC BAA-680 / CLIP 11262).